A 166-amino-acid polypeptide reads, in one-letter code: MNYTSFILAFQLCAILGSSTYYCQAAFFKEIENLKEYFNASSPDVGDGGPLFLDILKNWKEDSDKKIIQSQIVSFYFKLFENLKDNQVIQKSMDTIKEDLFVKFFNSSTSKLEDFQKLIQIPVNDLKVQRKAISELIKVMNDLSPKANLRKRKRSQNPFRGRRALQ.

An N-terminal signal peptide occupies residues 1-23 (MNYTSFILAFQLCAILGSSTYYC). A Pyrrolidone carboxylic acid modification is found at Q24. Residues N39 and N106 are each glycosylated (N-linked (GlcNAc...) asparagine). The segment at 147-166 (ANLRKRKRSQNPFRGRRALQ) is disordered. Positions 148-166 (NLRKRKRSQNPFRGRRALQ) are enriched in basic residues.

The protein belongs to the type II (or gamma) interferon family. In terms of assembly, homodimer. Interacts with IFNGR1 (via extracellular domain); this interaction promotes IFNGR1 dimerization. As to expression, released primarily from activated T lymphocytes.

The protein resides in the secreted. Its function is as follows. Type II interferon produced by immune cells such as T-cells and NK cells that plays crucial roles in antimicrobial, antiviral, and antitumor responses by activating effector immune cells and enhancing antigen presentation. Primarily signals through the JAK-STAT pathway after interaction with its receptor IFNGR1 to affect gene regulation. Upon IFNG binding, IFNGR1 intracellular domain opens out to allow association of downstream signaling components JAK2, JAK1 and STAT1, leading to STAT1 activation, nuclear translocation and transcription of IFNG-regulated genes. Many of the induced genes are transcription factors such as IRF1 that are able to further drive regulation of a next wave of transcription. Plays a role in class I antigen presentation pathway by inducing a replacement of catalytic proteasome subunits with immunoproteasome subunits. In turn, increases the quantity, quality, and repertoire of peptides for class I MHC loading. Increases the efficiency of peptide generation also by inducing the expression of activator PA28 that associates with the proteasome and alters its proteolytic cleavage preference. Up-regulates as well MHC II complexes on the cell surface by promoting expression of several key molecules such as cathepsins B/CTSB, H/CTSH, and L/CTSL. Participates in the regulation of hematopoietic stem cells during development and under homeostatic conditions by affecting their development, quiescence, and differentiation. In Equus asinus (Donkey), this protein is Interferon gamma (IFNG).